A 250-amino-acid polypeptide reads, in one-letter code: 2,3-bisphosphoglycerate-dependent phosphoglycerate mutase (250 aa).

Substrate-binding positions include 8–15 (RHGESTWN), 21–22 (TG), arginine 60, 87–90 (ERHY), lysine 98, and 114–115 (RR). The active-site Tele-phosphohistidine intermediate is the histidine 9. Residue glutamate 87 is the Proton donor/acceptor of the active site. The tract at residues 116–135 (SYDTPPPPLAANDPRSERSD) is disordered. 183 to 184 (GN) contacts substrate.

Belongs to the phosphoglycerate mutase family. BPG-dependent PGAM subfamily. In terms of assembly, homodimer.

It catalyses the reaction (2R)-2-phosphoglycerate = (2R)-3-phosphoglycerate. The protein operates within carbohydrate degradation; glycolysis; pyruvate from D-glyceraldehyde 3-phosphate: step 3/5. Functionally, catalyzes the interconversion of 2-phosphoglycerate and 3-phosphoglycerate. The chain is 2,3-bisphosphoglycerate-dependent phosphoglycerate mutase from Polaromonas naphthalenivorans (strain CJ2).